The chain runs to 311 residues: Malate dehydrogenase (311 aa).

NAD(+) is bound by residues 7 to 13 (GAAGGIG) and Asp-34. Residues Arg-81 and Arg-87 each coordinate substrate. Residues Asn-94 and 117–119 (ITN) each bind NAD(+). Asn-119 and Arg-153 together coordinate substrate. The active-site Proton acceptor is the His-177. Met-227 serves as a coordination point for NAD(+).

This sequence belongs to the LDH/MDH superfamily. MDH type 1 family. As to quaternary structure, homodimer.

It catalyses the reaction (S)-malate + NAD(+) = oxaloacetate + NADH + H(+). Its function is as follows. Catalyzes the reversible oxidation of malate to oxaloacetate. The protein is Malate dehydrogenase of Shewanella denitrificans (strain OS217 / ATCC BAA-1090 / DSM 15013).